The primary structure comprises 223 residues: Glutathione-specific gamma-glutamylcyclotransferase 1 (223 aa).

The tract at residues 1-26 is disordered; the sequence is MKQESASQSTPPPSLSPAPSSAQPSW. 36–41 is a binding site for substrate; the sequence is IFGYGS. E116 (proton acceptor) is an active-site residue.

This sequence belongs to the gamma-glutamylcyclotransferase family. ChaC subfamily. As to quaternary structure, interacts with NOTCH1 (via extracellular region). Widely expressed, with high expression in forebrain and anterior spinal cord. Expressed at intermediate level in the dorsal aorta and heart. Present throughout adult brain (at protein level).

Its subcellular location is the cytoplasm. It localises to the cytosol. It is found in the golgi apparatus. The protein localises to the trans-Golgi network. It catalyses the reaction glutathione = L-cysteinylglycine + 5-oxo-L-proline. Catalyzes the cleavage of glutathione into 5-oxo-L-proline and a Cys-Gly dipeptide. Acts specifically on glutathione, but not on other gamma-glutamyl peptides. Glutathione depletion is an important factor for apoptosis initiation and execution. Acts as a pro-apoptotic component of the unfolded protein response pathway by mediating the pro-apoptotic effects of the ATF4-ATF3-DDIT3/CHOP cascade. Negative regulator of Notch signaling pathway involved in embryonic neurogenesis: acts by inhibiting Notch cleavage by furin, maintaining Notch in an immature inactive form, thereby promoting neurogenesis in embryos. This is Glutathione-specific gamma-glutamylcyclotransferase 1 from Mus musculus (Mouse).